Consider the following 555-residue polypeptide: Membrane protein insertase YidC (555 aa).

Residues 7-24 (ILWVIFSMSLVLLYDNWQ) traverse the membrane as a helical segment. Low complexity-rich tracts occupy residues 40–54 (QQAAPAGAGGATPQA) and 64–81 (AAPGTVPAAPQAAAQPVG). The interval 40–81 (QQAAPAGAGGATPQADVPKANATNAAPGTVPAAPQAAAQPVG) is disordered. 5 helical membrane passes run 334–354 (LELVKDYGWLTILAKPLFWLL), 360–380 (FLGNWGWSIIGLTVLIKLVFF), 430–450 (LGGCLPIVIQIPVFIALYWVL), 468–488 (LSVPDPFYILPIVMAVSMFVQ), and 503–523 (VMMIMPLVFSFMFFFFPAGLV).

This sequence belongs to the OXA1/ALB3/YidC family. Type 1 subfamily. In terms of assembly, interacts with the Sec translocase complex via SecD. Specifically interacts with transmembrane segments of nascent integral membrane proteins during membrane integration.

It localises to the cell inner membrane. Its function is as follows. Required for the insertion and/or proper folding and/or complex formation of integral membrane proteins into the membrane. Involved in integration of membrane proteins that insert both dependently and independently of the Sec translocase complex, as well as at least some lipoproteins. Aids folding of multispanning membrane proteins. In Cupriavidus metallidurans (strain ATCC 43123 / DSM 2839 / NBRC 102507 / CH34) (Ralstonia metallidurans), this protein is Membrane protein insertase YidC.